The chain runs to 865 residues: Leucine--tRNA ligase (865 aa).

Positions 41–51 match the 'HIGH' region motif; the sequence is PYPSGRIHMGH. Positions 614–618 match the 'KMSKS' region motif; that stretch reads KMSKS. Lysine 617 serves as a coordination point for ATP.

This sequence belongs to the class-I aminoacyl-tRNA synthetase family.

It localises to the cytoplasm. The enzyme catalyses tRNA(Leu) + L-leucine + ATP = L-leucyl-tRNA(Leu) + AMP + diphosphate. The protein is Leucine--tRNA ligase of Rhodospirillum centenum (strain ATCC 51521 / SW).